Here is a 290-residue protein sequence, read N- to C-terminus: Eukaryotic translation initiation factor 3 subunit F-2 (290 aa).

The MPN domain maps to 12-150; that stretch reads VRLQPLVLFQ…TRLYCGVTMG (139 aa).

Belongs to the eIF-3 subunit F family. Component of the eukaryotic translation initiation factor 3 (eIF-3) complex. The eIF-3 complex interacts with pix.

It localises to the cytoplasm. In terms of biological role, component of the eukaryotic translation initiation factor 3 (eIF-3) complex, which is involved in protein synthesis of a specialized repertoire of mRNAs and, together with other initiation factors, stimulates binding of mRNA and methionyl-tRNAi to the 40S ribosome. The eIF-3 complex specifically targets and initiates translation of a subset of mRNAs involved in cell proliferation. The chain is Eukaryotic translation initiation factor 3 subunit F-2 from Drosophila virilis (Fruit fly).